The sequence spans 175 residues: Shikimate kinase (175 aa).

11-16 (GAGKTT) is an ATP binding site. Residue Thr-15 participates in Mg(2+) binding. The substrate site is built by Asp-33, Arg-57, and Gly-79. Position 118 (Arg-118) interacts with ATP. Arg-140 is a binding site for substrate.

The protein belongs to the shikimate kinase family. In terms of assembly, monomer. Mg(2+) serves as cofactor.

The protein localises to the cytoplasm. The enzyme catalyses shikimate + ATP = 3-phosphoshikimate + ADP + H(+). Its pathway is metabolic intermediate biosynthesis; chorismate biosynthesis; chorismate from D-erythrose 4-phosphate and phosphoenolpyruvate: step 5/7. In terms of biological role, catalyzes the specific phosphorylation of the 3-hydroxyl group of shikimic acid using ATP as a cosubstrate. In Bacteroides thetaiotaomicron (strain ATCC 29148 / DSM 2079 / JCM 5827 / CCUG 10774 / NCTC 10582 / VPI-5482 / E50), this protein is Shikimate kinase.